Reading from the N-terminus, the 345-residue chain is Methionine import ATP-binding protein MetN (345 aa).

The 240-residue stretch at 2-241 folds into the ABC transporter domain; it reads IKLKNISKIF…PKTELAQEFI (240 aa). 38–45 contacts ATP; sequence GASGAGKS.

The protein belongs to the ABC transporter superfamily. Methionine importer (TC 3.A.1.24) family. In terms of assembly, the complex is composed of two ATP-binding proteins (MetN), two transmembrane proteins (MetI) and a solute-binding protein (MetQ).

It localises to the cell inner membrane. It carries out the reaction L-methionine(out) + ATP + H2O = L-methionine(in) + ADP + phosphate + H(+). It catalyses the reaction D-methionine(out) + ATP + H2O = D-methionine(in) + ADP + phosphate + H(+). Part of the ABC transporter complex MetNIQ involved in methionine import. Responsible for energy coupling to the transport system. The chain is Methionine import ATP-binding protein MetN from Mannheimia succiniciproducens (strain KCTC 0769BP / MBEL55E).